The chain runs to 446 residues: Argininosuccinate synthase (446 aa).

ATP contacts are provided by residues 17 to 25 (AFSGGLDTS) and A43. Y99 provides a ligand contact to L-citrulline. Positions 129 and 131 each coordinate ATP. L-aspartate is bound by residues T131, N135, and D136. An L-citrulline-binding site is contributed by N135. D136 serves as a coordination point for ATP. L-citrulline-binding residues include R139 and S192. Position 194 (D194) interacts with ATP. The L-citrulline site is built by T201, E203, and E280.

It belongs to the argininosuccinate synthase family. Type 2 subfamily. As to quaternary structure, homotetramer.

It localises to the cytoplasm. It catalyses the reaction L-citrulline + L-aspartate + ATP = 2-(N(omega)-L-arginino)succinate + AMP + diphosphate + H(+). It participates in amino-acid biosynthesis; L-arginine biosynthesis; L-arginine from L-ornithine and carbamoyl phosphate: step 2/3. The polypeptide is Argininosuccinate synthase (Methylibium petroleiphilum (strain ATCC BAA-1232 / LMG 22953 / PM1)).